We begin with the raw amino-acid sequence, 271 residues long: Tryptophan synthase alpha chain (271 aa).

Residues E49 and D60 each act as proton acceptor in the active site.

The protein belongs to the TrpA family. In terms of assembly, tetramer of two alpha and two beta chains.

The catalysed reaction is (1S,2R)-1-C-(indol-3-yl)glycerol 3-phosphate + L-serine = D-glyceraldehyde 3-phosphate + L-tryptophan + H2O. Its pathway is amino-acid biosynthesis; L-tryptophan biosynthesis; L-tryptophan from chorismate: step 5/5. In terms of biological role, the alpha subunit is responsible for the aldol cleavage of indoleglycerol phosphate to indole and glyceraldehyde 3-phosphate. This chain is Tryptophan synthase alpha chain, found in Burkholderia lata (strain ATCC 17760 / DSM 23089 / LMG 22485 / NCIMB 9086 / R18194 / 383).